Reading from the N-terminus, the 25-residue chain is U11-ctenitoxin-Co1b (25 aa).

Disulfide bonds link Cys4-Cys18 and Cys11-Cys22.

As to quaternary structure, monomer. In terms of tissue distribution, expressed by the venom gland.

The protein localises to the secreted. Its function is as follows. Neurotoxin. The chain is U11-ctenitoxin-Co1b from Ctenus ornatus (Brazilian spider).